The sequence spans 165 residues: E3 ubiquitin ligase complex SCF subunit sconC (165 aa).

Positions 106-165 (ILAANYLDIKALLDVGCKTVANMIKGKSPEEIRKTFNIQNDFTPEEEDQIRRENEWAEDR) are interaction with the F-box domain of F-box proteins.

It belongs to the SKP1 family. Component of the SCF (SKP1-CUL1-F-box protein) E3 ubiquitin ligase complexes.

The protein operates within protein modification; protein ubiquitination. In terms of biological role, essential component of the SCF (SKP1-CUL1-F-box protein) E3 ubiquitin ligase complexes, which mediate the ubiquitination and subsequent proteasomal degradation of target proteins. Controls sulfur metabolite repression, probably by mediating the inactivation or degradation of the metR transcription factor. The chain is E3 ubiquitin ligase complex SCF subunit sconC (sconC) from Arthroderma otae (strain ATCC MYA-4605 / CBS 113480) (Microsporum canis).